An 827-amino-acid polypeptide reads, in one-letter code: Transcription factor SOX-6 (827 aa).

Over residues 1–10 (MSSKQATSPF) the composition is skewed to polar residues. Residues 1–51 (MSSKQATSPFACTADGEEAMTQDLTSREKEEGSDQHPASHLPLHPIMHNKP) form a disordered region. Basic and acidic residues predominate over residues 25–34 (TSREKEEGSD). Phosphothreonine is present on Thr-119. The stretch at 184-262 (LAEKERQLST…LLQQQIQVQG (79 aa)) forms a coiled coil. Disordered regions lie at residues 334–361 (QINP…GHSY) and 379–470 (VSPG…PIGG). The span at 341–357 (GISDRFGRNLDPSEHGG) shows a compositional bias: basic and acidic residues. Ser-399 carries the post-translational modification Phosphoserine. Position 401 is a phosphothreonine (Thr-401). Residues Lys-404 and Lys-417 each participate in a glycyl lysine isopeptide (Lys-Gly) (interchain with G-Cter in SUMO) cross-link. Polar residues-rich tracts occupy residues 421 to 431 (TAQPLNLSSRP) and 439 to 461 (SPTS…LPNK). A phosphoserine mark is found at Ser-439 and Ser-442. Residues 620–688 (IKRPMNAFMV…IHLEKYPNYK (69 aa)) constitute a DNA-binding region (HMG box). Disordered regions lie at residues 752–772 (TPSP…EPSL) and 786–827 (ASLA…VSAN). A compositionally biased stretch (acidic residues) spans 795–808 (NGEDEMEAYDDYED).

Homodimer. Interacts with DAZAP2. May interact with CENPK. In terms of processing, sumoylation inhibits the transcriptional activity. In terms of tissue distribution, highly expressed in testis.

It is found in the nucleus. It localises to the cytoplasm. In terms of biological role, transcription factor that plays a key role in several developmental processes, including neurogenesis, chondrocytes differentiation and cartilage formation. Specifically binds the 5'-AACAAT-3' DNA motif present in enhancers and super-enhancers and promotes expression of genes important for chondrogenesis. Required for overt chondrogenesis when condensed prechondrocytes differentiate into early stage chondrocytes: SOX5 and SOX6 cooperatively bind with SOX9 on active enhancers and super-enhancers associated with cartilage-specific genes, and thereby potentiate SOX9's ability to transactivate. Not involved in precartilaginous condensation, the first step in chondrogenesis, during which skeletal progenitors differentiate into prechondrocytes. Together with SOX5, required to form and maintain a pool of highly proliferating chondroblasts between epiphyses and metaphyses, to form columnar chondroblasts, delay chondrocyte prehypertrophy but promote hypertrophy, and to delay terminal differentiation of chondrocytes on contact with ossification fronts. Binds to the proximal promoter region of the myelin protein MPZ gene, and is thereby involved in the differentiation of oligodendroglia in the developing spinal tube. Binds to the gene promoter of MBP and acts as a transcriptional repressor. The chain is Transcription factor SOX-6 from Mus musculus (Mouse).